The chain runs to 45 residues: Large ribosomal subunit protein bL34 (45 aa).

Positions 1–45 (MTKRTFGGTSRKRKRVSGFRVRMRSHTGRRVIKSRRKRGRDRIAV) are disordered. Residues 10–45 (SRKRKRVSGFRVRMRSHTGRRVIKSRRKRGRDRIAV) show a composition bias toward basic residues.

The protein belongs to the bacterial ribosomal protein bL34 family.

This is Large ribosomal subunit protein bL34 from Prochlorococcus marinus (strain MIT 9515).